A 260-amino-acid polypeptide reads, in one-letter code: Exosome complex component Rrp42 (260 aa).

It belongs to the RNase PH family. Rrp42 subfamily. As to quaternary structure, component of the archaeal exosome complex. Forms a hexameric ring-like arrangement composed of 3 Rrp41-Rrp42 heterodimers. The hexameric ring associates with a trimer of Rrp4 and/or Csl4 subunits.

It localises to the cytoplasm. In terms of biological role, non-catalytic component of the exosome, which is a complex involved in RNA degradation. Contributes to the structuring of the Rrp41 active site. This Thermoplasma acidophilum (strain ATCC 25905 / DSM 1728 / JCM 9062 / NBRC 15155 / AMRC-C165) protein is Exosome complex component Rrp42.